Here is a 407-residue protein sequence, read N- to C-terminus: Phosphopentomutase (407 aa).

Residues Asp11, Asp305, His310, Asp346, His347, and His358 each coordinate Mn(2+).

This sequence belongs to the phosphopentomutase family. The cofactor is Mn(2+).

The protein localises to the cytoplasm. The catalysed reaction is 2-deoxy-alpha-D-ribose 1-phosphate = 2-deoxy-D-ribose 5-phosphate. The enzyme catalyses alpha-D-ribose 1-phosphate = D-ribose 5-phosphate. It participates in carbohydrate degradation; 2-deoxy-D-ribose 1-phosphate degradation; D-glyceraldehyde 3-phosphate and acetaldehyde from 2-deoxy-alpha-D-ribose 1-phosphate: step 1/2. Its function is as follows. Isomerase that catalyzes the conversion of deoxy-ribose 1-phosphate (dRib-1-P) and ribose 1-phosphate (Rib-1-P) to deoxy-ribose 5-phosphate (dRib-5-P) and ribose 5-phosphate (Rib-5-P), respectively. This chain is Phosphopentomutase, found in Legionella pneumophila (strain Paris).